The sequence spans 320 residues: Biotin synthase (320 aa).

Residues 43–270 (GAVQKSQLLS…KSWVRLSAGR (228 aa)) form the Radical SAM core domain. [4Fe-4S] cluster contacts are provided by Cys58, Cys62, and Cys65. Residues Cys102, Cys133, Cys193, and Arg265 each coordinate [2Fe-2S] cluster.

The protein belongs to the radical SAM superfamily. Biotin synthase family. As to quaternary structure, homodimer. The cofactor is [4Fe-4S] cluster. [2Fe-2S] cluster is required as a cofactor.

The enzyme catalyses (4R,5S)-dethiobiotin + (sulfur carrier)-SH + 2 reduced [2Fe-2S]-[ferredoxin] + 2 S-adenosyl-L-methionine = (sulfur carrier)-H + biotin + 2 5'-deoxyadenosine + 2 L-methionine + 2 oxidized [2Fe-2S]-[ferredoxin]. It functions in the pathway cofactor biosynthesis; biotin biosynthesis; biotin from 7,8-diaminononanoate: step 2/2. Functionally, catalyzes the conversion of dethiobiotin (DTB) to biotin by the insertion of a sulfur atom into dethiobiotin via a radical-based mechanism. The protein is Biotin synthase of Hyphomonas neptunium (strain ATCC 15444).